Reading from the N-terminus, the 360-residue chain is A-type ATP synthase subunit C (360 aa).

A disordered region spans residues 1–25; the sequence is MRLLEKLWGQKPSRKSDKKKNGTSN.

Belongs to the V-ATPase V0D/AC39 subunit family. As to quaternary structure, has multiple subunits with at least A(3), B(3), C, D, E, F, H, I and proteolipid K(x).

It is found in the cell membrane. Its function is as follows. Component of the A-type ATP synthase that produces ATP from ADP in the presence of a proton gradient across the membrane. The protein is A-type ATP synthase subunit C of Methanosarcina barkeri (strain Fusaro / DSM 804).